Here is a 531-residue protein sequence, read N- to C-terminus: Peptide chain release factor 3 (531 aa).

The 269-residue stretch at 10–278 (RRRRTFAIIS…SLIDWAPAPK (269 aa)) folds into the tr-type G domain. GTP contacts are provided by residues 19–26 (SHPDAGKT), 87–91 (DTPGH), and 141–144 (NKYD).

Belongs to the TRAFAC class translation factor GTPase superfamily. Classic translation factor GTPase family. PrfC subfamily.

It is found in the cytoplasm. Functionally, increases the formation of ribosomal termination complexes and stimulates activities of RF-1 and RF-2. It binds guanine nucleotides and has strong preference for UGA stop codons. It may interact directly with the ribosome. The stimulation of RF-1 and RF-2 is significantly reduced by GTP and GDP, but not by GMP. The sequence is that of Peptide chain release factor 3 from Neisseria gonorrhoeae (strain NCCP11945).